The sequence spans 186 residues: Ribosome-recycling factor (186 aa).

The interval 144 to 163 (EKDGVIGQDESRAQSERVQK) is disordered.

Belongs to the RRF family.

Its subcellular location is the cytoplasm. Responsible for the release of ribosomes from messenger RNA at the termination of protein biosynthesis. May increase the efficiency of translation by recycling ribosomes from one round of translation to another. The protein is Ribosome-recycling factor of Rhizobium etli (strain CIAT 652).